The primary structure comprises 108 residues: UPF0060 membrane protein DSY4157 (108 aa).

4 helical membrane passes run 6–26 (ILFI…WLWL), 31–51 (PYWY…IPTL), 60–80 (VYAA…WGVD), and 86–106 (TYDW…LWAP).

It belongs to the UPF0060 family.

The protein localises to the cell membrane. The chain is UPF0060 membrane protein DSY4157 from Desulfitobacterium hafniense (strain Y51).